Reading from the N-terminus, the 305-residue chain is Oxygen-dependent coproporphyrinogen-III oxidase (305 aa).

Position 92 (Ser92) interacts with substrate. Residues His96 and His106 each contribute to the a divalent metal cation site. Residue His106 is the Proton donor of the active site. 108–110 (NVR) serves as a coordination point for substrate. A divalent metal cation-binding residues include His145 and His175. The segment at 239–274 (YVEFNLLFDRGTLFGLQSGGRAESILISLPPLVRWE) is important for dimerization. 257 to 259 (GGR) provides a ligand contact to substrate.

It belongs to the aerobic coproporphyrinogen-III oxidase family. In terms of assembly, homodimer. A divalent metal cation is required as a cofactor.

Its subcellular location is the cytoplasm. The enzyme catalyses coproporphyrinogen III + O2 + 2 H(+) = protoporphyrinogen IX + 2 CO2 + 2 H2O. The protein operates within porphyrin-containing compound metabolism; protoporphyrin-IX biosynthesis; protoporphyrinogen-IX from coproporphyrinogen-III (O2 route): step 1/1. In terms of biological role, involved in the heme biosynthesis. Catalyzes the aerobic oxidative decarboxylation of propionate groups of rings A and B of coproporphyrinogen-III to yield the vinyl groups in protoporphyrinogen-IX. This is Oxygen-dependent coproporphyrinogen-III oxidase from Xylella fastidiosa (strain Temecula1 / ATCC 700964).